The following is a 238-amino-acid chain: MRPAGRSNNQVRPVTLTRNYTKHAEGSVLVEFGDTKVLCTASIEEGVPRFLKGQGQGWITAEYGMLPRSTHTRNAREAAKGKQGGRTMEIQRLIARALRAAVDLKALGEFTITLDCDVLQADGGTRTASITGACVALADALQKLVENGKLKTNPMKGMVAAVSVGIVNGEAVCDLEYVEDSAAETDMNVVMTEDGRIIEVQGTAEGEPFTHEELLTLLALARGGIESIVVTQKAALAN.

Residues Arg-86 and 124 to 126 (GTR) each bind phosphate.

Belongs to the RNase PH family. Homohexameric ring arranged as a trimer of dimers.

The enzyme catalyses tRNA(n+1) + phosphate = tRNA(n) + a ribonucleoside 5'-diphosphate. In terms of biological role, phosphorolytic 3'-5' exoribonuclease that plays an important role in tRNA 3'-end maturation. Removes nucleotide residues following the 3'-CCA terminus of tRNAs; can also add nucleotides to the ends of RNA molecules by using nucleoside diphosphates as substrates, but this may not be physiologically important. Probably plays a role in initiation of 16S rRNA degradation (leading to ribosome degradation) during starvation. The protein is Ribonuclease PH of Escherichia coli O6:K15:H31 (strain 536 / UPEC).